Here is a 435-residue protein sequence, read N- to C-terminus: Legumain (435 aa).

An N-terminal signal peptide occupies residues Met-1–Ala-17. Residue Asn-93 is glycosylated (N-linked (GlcNAc...) asparagine). His-150 is a catalytic residue. An N-linked (GlcNAc...) asparagine glycan is attached at Asn-169. Cys-191 acts as the Nucleophile in catalysis. Asn-215, Asn-265, and Asn-274 each carry an N-linked (GlcNAc...) asparagine glycan. The propeptide occupies Asn-326–Tyr-435. Intrachain disulfides connect Cys-380/Cys-414 and Cys-392/Cys-431.

Belongs to the peptidase C13 family. As to quaternary structure, homodimer before autocatalytic removal of the propeptide. Monomer after autocatalytic processing. May interact with integrins. In terms of processing, activated by autocatalytic processing at pH 4. Detected in kidney cortex (at protein level).

The protein localises to the lysosome. The enzyme catalyses Hydrolysis of proteins and small molecule substrates at -Asn-|-Xaa- bonds.. Has a strict specificity for hydrolysis of asparaginyl bonds. Can also cleave aspartyl bonds slowly, especially under acidic conditions. Involved in the processing of proteins for MHC class II antigen presentation in the lysosomal/endosomal system. Also involved in MHC class I antigen presentation in cross-presenting dendritic cells by mediating cleavage and maturation of Perforin-2 (MPEG1), thereby promoting antigen translocation in the cytosol. Required for normal lysosomal protein degradation in renal proximal tubules. Required for normal degradation of internalized EGFR. Plays a role in the regulation of cell proliferation via its role in EGFR degradation. The sequence is that of Legumain (Lgmn) from Rattus norvegicus (Rat).